The chain runs to 311 residues: tRNA dimethylallyltransferase (311 aa).

Position 9 to 16 (Gly9 to Thr16) interacts with ATP. Residue Thr11–Thr16 participates in substrate binding. The tract at residues Asp34 to Gln37 is interaction with substrate tRNA.

The protein belongs to the IPP transferase family. Monomer. It depends on Mg(2+) as a cofactor.

It catalyses the reaction adenosine(37) in tRNA + dimethylallyl diphosphate = N(6)-dimethylallyladenosine(37) in tRNA + diphosphate. Catalyzes the transfer of a dimethylallyl group onto the adenine at position 37 in tRNAs that read codons beginning with uridine, leading to the formation of N6-(dimethylallyl)adenosine (i(6)A). The chain is tRNA dimethylallyltransferase from Clostridium botulinum (strain Langeland / NCTC 10281 / Type F).